A 187-amino-acid chain; its full sequence is Cytochrome b-245 chaperone 1 (187 aa).

A helical membrane pass occupies residues 20-42; it reads GIRSWSLLVGILSTGLAAAYYSG. The tract at residues 167 to 187 is disordered; the sequence is ESPSERSQSSDSEPDGPGGQS. A phosphoserine mark is found at S168 and S170.

It belongs to the CYBC1 family. In terms of assembly, interacts with CYBB; CYBC1 may act as a chaperone stabilizing Cytochrome b-245 heterodimer.

The protein localises to the endoplasmic reticulum membrane. Functions as a chaperone necessary for a stable expression of the CYBA and CYBB subunits of the cytochrome b-245 heterodimer. Controls the phagocyte respiratory burst and is essential for innate immunity. This Mus musculus (Mouse) protein is Cytochrome b-245 chaperone 1.